The sequence spans 496 residues: Aspartyl/glutamyl-tRNA(Asn/Gln) amidotransferase subunit B (496 aa).

The disordered stretch occupies residues 475–496; sequence TGGSADPSKVNTLLREQLEDKK.

It belongs to the GatB/GatE family. GatB subfamily. In terms of assembly, heterotrimer of A, B and C subunits.

It carries out the reaction L-glutamyl-tRNA(Gln) + L-glutamine + ATP + H2O = L-glutaminyl-tRNA(Gln) + L-glutamate + ADP + phosphate + H(+). The catalysed reaction is L-aspartyl-tRNA(Asn) + L-glutamine + ATP + H2O = L-asparaginyl-tRNA(Asn) + L-glutamate + ADP + phosphate + 2 H(+). Functionally, allows the formation of correctly charged Asn-tRNA(Asn) or Gln-tRNA(Gln) through the transamidation of misacylated Asp-tRNA(Asn) or Glu-tRNA(Gln) in organisms which lack either or both of asparaginyl-tRNA or glutaminyl-tRNA synthetases. The reaction takes place in the presence of glutamine and ATP through an activated phospho-Asp-tRNA(Asn) or phospho-Glu-tRNA(Gln). The polypeptide is Aspartyl/glutamyl-tRNA(Asn/Gln) amidotransferase subunit B (Haloquadratum walsbyi (strain DSM 16790 / HBSQ001)).